A 209-amino-acid chain; its full sequence is MTRYVISRLSAIALLALAPALALADGAQDQLKAFVAKVQSATGDFTQSTVGPQGRTQPAQSGSFAFQRPGKFKWAVARPYEQLVISDGKQVYQYDPDLAQVTERKVDQAIGTSPAAILFGSGDLDKAFHVSPLPDRDGLQWLRAKPRNADAGFSQVDIAMNGDLPARVELLDAFGQTTRVDLSNIQANPKLPAAEFHFTAPSGVDVVKM.

The signal sequence occupies residues 1-24 (MTRYVISRLSAIALLALAPALALA).

It belongs to the LolA family. In terms of assembly, monomer.

The protein resides in the periplasm. Functionally, participates in the translocation of lipoproteins from the inner membrane to the outer membrane. Only forms a complex with a lipoprotein if the residue after the N-terminal Cys is not an aspartate (The Asp acts as a targeting signal to indicate that the lipoprotein should stay in the inner membrane). The polypeptide is Outer-membrane lipoprotein carrier protein (Bordetella avium (strain 197N)).